Reading from the N-terminus, the 372-residue chain is Glutamate 5-kinase (372 aa).

Lysine 14 contacts ATP. Residues serine 54, aspartate 141, and asparagine 153 each coordinate substrate. 173–174 (TD) is a binding site for ATP. Positions 280 to 358 (RGTLVLDDGA…DAIVGLLGYM (79 aa)) constitute a PUA domain.

The protein belongs to the glutamate 5-kinase family.

It localises to the cytoplasm. The enzyme catalyses L-glutamate + ATP = L-glutamyl 5-phosphate + ADP. It functions in the pathway amino-acid biosynthesis; L-proline biosynthesis; L-glutamate 5-semialdehyde from L-glutamate: step 1/2. Its function is as follows. Catalyzes the transfer of a phosphate group to glutamate to form L-glutamate 5-phosphate. The sequence is that of Glutamate 5-kinase from Pseudomonas fluorescens (strain Pf0-1).